A 328-amino-acid chain; its full sequence is GMP reductase (328 aa).

Cys176 serves as the catalytic Thioimidate intermediate. 205–228 is a binding site for NADP(+); sequence IIADGGIRTHGDIAKSIRFGASMI.

It belongs to the IMPDH/GMPR family. GuaC type 2 subfamily.

It catalyses the reaction IMP + NH4(+) + NADP(+) = GMP + NADPH + 2 H(+). Catalyzes the irreversible NADPH-dependent deamination of GMP to IMP. It functions in the conversion of nucleobase, nucleoside and nucleotide derivatives of G to A nucleotides, and in maintaining the intracellular balance of A and G nucleotides. The protein is GMP reductase of Streptococcus pneumoniae (strain ATCC 700669 / Spain 23F-1).